A 364-amino-acid polypeptide reads, in one-letter code: tRNA 2-selenouridine synthase (364 aa).

The Rhodanese domain maps to 14–137 (LIADTPIIDV…LRQTTIQATI (124 aa)). The active-site S-selanylcysteine intermediate is Cys97.

The protein belongs to the SelU family. As to quaternary structure, monomer.

The catalysed reaction is 5-methylaminomethyl-2-thiouridine(34) in tRNA + selenophosphate + (2E)-geranyl diphosphate + H2O + H(+) = 5-methylaminomethyl-2-selenouridine(34) in tRNA + (2E)-thiogeraniol + phosphate + diphosphate. It catalyses the reaction 5-methylaminomethyl-2-thiouridine(34) in tRNA + (2E)-geranyl diphosphate = 5-methylaminomethyl-S-(2E)-geranyl-thiouridine(34) in tRNA + diphosphate. The enzyme catalyses 5-methylaminomethyl-S-(2E)-geranyl-thiouridine(34) in tRNA + selenophosphate + H(+) = 5-methylaminomethyl-2-(Se-phospho)selenouridine(34) in tRNA + (2E)-thiogeraniol. It carries out the reaction 5-methylaminomethyl-2-(Se-phospho)selenouridine(34) in tRNA + H2O = 5-methylaminomethyl-2-selenouridine(34) in tRNA + phosphate. Involved in the post-transcriptional modification of the uridine at the wobble position (U34) of tRNA(Lys), tRNA(Glu) and tRNA(Gln). Catalyzes the conversion of 2-thiouridine (S2U-RNA) to 2-selenouridine (Se2U-RNA). Acts in a two-step process involving geranylation of 2-thiouridine (S2U) to S-geranyl-2-thiouridine (geS2U) and subsequent selenation of the latter derivative to 2-selenouridine (Se2U) in the tRNA chain. The protein is tRNA 2-selenouridine synthase of Escherichia coli (strain 55989 / EAEC).